Consider the following 395-residue polypeptide: Transmembrane protein 79 (395 aa).

Residues 1 to 115 (MTEPETLALL…PPTKLEELPE (115 aa)) are disordered. At 1-204 (MTEPETLALL…GREALRAVAS (204 aa)) the chain is on the cytoplasmic side. A helical transmembrane segment spans residues 205 to 225 (VGAALILFPCLLYGAYAFLPF). Residues 226-244 (DAPRLPTMSSRLIYTLRCG) lie on the Extracellular side of the membrane. A helical membrane pass occupies residues 245-265 (VFATFPIVLGILVYGLSLLCF). Residues 266-290 (AALRPFGEPRREVEIHRQYVAQSVQ) lie on the Cytoplasmic side of the membrane. A helical membrane pass occupies residues 291-311 (LFILYFFNLAVLSTYLPQDAL). Topologically, residues 312–313 (KL) are extracellular. The helical transmembrane segment at 314–334 (LPLLTGLFAISRLIYWLTFAV) threads the bilayer. Residues 335 to 343 (GRSFRGFGY) are Cytoplasmic-facing. A helical transmembrane segment spans residues 344–364 (GLTFLPLLSMLLWNFYYMFVV). Topologically, residues 365–395 (EPERMLTASESRLDYPDHARSASDYRPRSRG) are extracellular.

It is found in the lysosome. The protein localises to the golgi apparatus. It localises to the trans-Golgi network. The protein resides in the membrane. Functionally, contributes to the epidermal integrity and skin barrier function. Plays a role in the lamellar granule (LG) secretory system and in the stratum corneum (SC) epithelial cell formation. This chain is Transmembrane protein 79 (TMEM79), found in Bos taurus (Bovine).